A 260-amino-acid chain; its full sequence is Cytochrome c oxidase subunit 3 (260 aa).

The Mitochondrial matrix portion of the chain corresponds to 1–15; sequence MTHQTHAYHMVNPSP. The helical transmembrane segment at 16-34 threads the bilayer; sequence WPLTGALSALLMTSGLAMW. The Mitochondrial intermembrane portion of the chain corresponds to 35–40; that stretch reads FHFNST. Residues 41–66 traverse the membrane as a helical segment; the sequence is ALLMIGLTTNMLTMYQWWRDIIREST. Residues 67–72 lie on the Mitochondrial matrix side of the membrane; the sequence is FQGHHT. The helical transmembrane segment at 73-105 threads the bilayer; it reads PAVQKGLRYGMILFIISEVLFFTGFFWAFYHSS. Residues 106–128 lie on the Mitochondrial intermembrane side of the membrane; it reads LAPTPELGGCWPPTGIHPLNPLE. The chain crosses the membrane as a helical span at residues 129–152; the sequence is VPLLNTSVLLASGVSITWAHHSLM. Topologically, residues 153 to 155 are mitochondrial matrix; sequence EGD. Residues 156–183 form a helical membrane-spanning segment; that stretch reads RNHMLQALFITITLGVYFTLLQASEYYE. Residues 184 to 190 lie on the Mitochondrial intermembrane side of the membrane; sequence APFTISD. Residues 191-223 form a helical membrane-spanning segment; sequence GVYGSTFFVATGFHGLHVIIGSTFLIVCFFRQL. Residues 224-232 are Mitochondrial matrix-facing; that stretch reads KFHFTSNHH. The chain crosses the membrane as a helical span at residues 233–256; sequence FGFEAAAWYWHFVDVVWLFLYVSI. Over 257–260 the chain is Mitochondrial intermembrane; that stretch reads YWWG.

Belongs to the cytochrome c oxidase subunit 3 family. In terms of assembly, component of the cytochrome c oxidase (complex IV, CIV), a multisubunit enzyme composed of 14 subunits. The complex is composed of a catalytic core of 3 subunits MT-CO1, MT-CO2 and MT-CO3, encoded in the mitochondrial DNA, and 11 supernumerary subunits COX4I, COX5A, COX5B, COX6A, COX6B, COX6C, COX7A, COX7B, COX7C, COX8 and NDUFA4, which are encoded in the nuclear genome. The complex exists as a monomer or a dimer and forms supercomplexes (SCs) in the inner mitochondrial membrane with NADH-ubiquinone oxidoreductase (complex I, CI) and ubiquinol-cytochrome c oxidoreductase (cytochrome b-c1 complex, complex III, CIII), resulting in different assemblies (supercomplex SCI(1)III(2)IV(1) and megacomplex MCI(2)III(2)IV(2)).

The protein resides in the mitochondrion inner membrane. It catalyses the reaction 4 Fe(II)-[cytochrome c] + O2 + 8 H(+)(in) = 4 Fe(III)-[cytochrome c] + 2 H2O + 4 H(+)(out). Component of the cytochrome c oxidase, the last enzyme in the mitochondrial electron transport chain which drives oxidative phosphorylation. The respiratory chain contains 3 multisubunit complexes succinate dehydrogenase (complex II, CII), ubiquinol-cytochrome c oxidoreductase (cytochrome b-c1 complex, complex III, CIII) and cytochrome c oxidase (complex IV, CIV), that cooperate to transfer electrons derived from NADH and succinate to molecular oxygen, creating an electrochemical gradient over the inner membrane that drives transmembrane transport and the ATP synthase. Cytochrome c oxidase is the component of the respiratory chain that catalyzes the reduction of oxygen to water. Electrons originating from reduced cytochrome c in the intermembrane space (IMS) are transferred via the dinuclear copper A center (CU(A)) of subunit 2 and heme A of subunit 1 to the active site in subunit 1, a binuclear center (BNC) formed by heme A3 and copper B (CU(B)). The BNC reduces molecular oxygen to 2 water molecules using 4 electrons from cytochrome c in the IMS and 4 protons from the mitochondrial matrix. The protein is Cytochrome c oxidase subunit 3 (MT-CO3) of Bos mutus grunniens (Wild yak).